The chain runs to 167 residues: Minor fimbrial protein PrsF (167 aa).

A signal peptide spans 1–18 (MIRLSLFISLLLTSVAVL).

Its subcellular location is the secreted. It is found in the fimbrium. Fimbriae (also called pili), polar filaments radiating from the surface of the bacterium to a length of 0.5-1.5 micrometers and numbering 100-300 per cell, enable bacteria to colonize the epithelium of specific host organs. The sequence is that of Minor fimbrial protein PrsF (prsF) from Escherichia coli.